We begin with the raw amino-acid sequence, 209 residues long: Mitochondrial import inner membrane translocase subunit Tim23 (209 aa).

3 consecutive transmembrane segments (helical) span residues 73 to 93 (FELA…FGAV), 125 to 145 (ALWA…GVII), and 180 to 200 (GGLA…WEHI).

This sequence belongs to the Tim17/Tim22/Tim23 family. In terms of assembly, component of the TIM23 complex at least composed of timm23, timm17 and timm50. The complex interacts with the timm44 component of the PAM complex.

It localises to the mitochondrion inner membrane. Functionally, essential component of the TIM23 complex, a complex that mediates the translocation of transit peptide-containing proteins across the mitochondrial inner membrane. The protein is Mitochondrial import inner membrane translocase subunit Tim23 (timm23) of Xenopus tropicalis (Western clawed frog).